The sequence spans 508 residues: Ell-associated factor Eaf (508 aa).

2 stretches are compositionally biased toward polar residues: residues 140-150 (GQGQLHSQGAN) and 161-190 (GHST…SRRN). Disordered regions lie at residues 140–226 (GQGQ…WDAN) and 251–508 (HNSG…DDDE). The residue at position 200 (Ser-200) is a Phosphoserine. Low complexity predominate over residues 251–268 (HNSGHANTSGSSTGSATG). 2 stretches are compositionally biased toward polar residues: residues 272–281 (FGSTSSSSHM) and 296–313 (QQMQ…QQPS). Low complexity predominate over residues 314–341 (NYGRGYNGGHNHVQQQQQRNSPQQQRPP). The segment covering 391–406 (DSSDSDSGSDSDDSTE) has biased composition (acidic residues). Composition is skewed to low complexity over residues 412 to 444 (QGQQ…HLNQ), 461 to 477 (HQHQ…QKQQ), and 489 to 502 (NDLL…SSNS).

It belongs to the EAF family.

The protein localises to the nucleus. Its function is as follows. Promotes transcriptional elongation by Su(Tpl)/ELL. Essential for development. The polypeptide is Ell-associated factor Eaf (Drosophila erecta (Fruit fly)).